The primary structure comprises 274 residues: Large ribosomal subunit protein uL2 (274 aa).

2 disordered regions span residues 21–59 (KVGLSKDEPEKSLTSGKKSSGGRNNHGRITTRHRGGGHK) and 224–274 (AMNP…QLKG). Low complexity predominate over residues 32 to 42 (SLTSGKKSSGG). Residues 45-59 (NHGRITTRHRGGGHK) show a composition bias toward basic residues. The span at 263 to 274 (KSSDKYIKQLKG) shows a compositional bias: basic and acidic residues.

It belongs to the universal ribosomal protein uL2 family. As to quaternary structure, part of the 50S ribosomal subunit. Forms a bridge to the 30S subunit in the 70S ribosome.

In terms of biological role, one of the primary rRNA binding proteins. Required for association of the 30S and 50S subunits to form the 70S ribosome, for tRNA binding and peptide bond formation. It has been suggested to have peptidyltransferase activity; this is somewhat controversial. Makes several contacts with the 16S rRNA in the 70S ribosome. The polypeptide is Large ribosomal subunit protein uL2 (Wolbachia pipientis wMel).